The sequence spans 48 residues: Putative protein P' (48 aa).

This Bos taurus (Bovine) protein is Putative protein P'.